The chain runs to 1063 residues: Structural polyprotein (1063 aa).

The tract at residues 1 to 131 (MASTTPITME…LGPPTNPFQA (131 aa)) is disordered. Residues 30–69 (GASQPRRPRPPRQRDSSTSGDDSGRDSGGPRRRRGNRGRG) are human C1QBP/SF2P32-binding. A Phosphoserine; by host modification is found at S46. Basic residues predominate over residues 59 to 69 (PRRRRGNRGRG). Residues 70–87 (QRKDWSRAPPPPEERQEG) show a composition bias toward basic and acidic residues. The segment covering 93–107 (APKPSRAPPQQPQPP) has biased composition (pro residues). C153 and C197 are joined by a disulfide. The segment at 279–300 (GAPQAFLAGLLLAAVAVGTARA) is functions as E2 signal peptide. At 301–534 (GLQPRVDMAA…LWLATANALS (234 aa)) the chain is on the extracellular side. N-linked (GlcNAc...) asparagine; by host glycans are attached at residues N353, N371, and N429. The helical transmembrane segment at 535–555 (LDHALAAFVLLVPWVLIFMVC) threads the bilayer. Residues 556–582 (RRACRRRGAAAALTAVVLQGYNPPAYG) lie on the Cytoplasmic side of the membrane. Positions 563–582 (GAAAALTAVVLQGYNPPAYG) are functions as E1 signal peptide. Topologically, residues 583 to 1028 (EEAFTYLCTA…QTWAEWAAAH (446 aa)) are extracellular. 8 cysteine pairs are disulfide-bonded: C590–C595, C619–C824, C641–C653, C699–C712, C758–C767, C807–C817, C931–C934, and C950–C983. The N-linked (GlcNAc...) asparagine; by host glycan is linked to N658. 2 residues coordinate Ca(2+): N670 and A671. Positions 718 and 719 each coordinate Ca(2+). A glycan (N-linked (GlcNAc...) asparagine; by host) is linked at N791. 2 O-linked (GalNAc...) threonine; by host glycosylation sites follow: T1011 and T1012. The helical transmembrane segment at 1029 to 1049 (WWQLTLGAICALPLAGLLACC) threads the bilayer. Topologically, residues 1050 to 1063 (AKCLYYLRGAIAPR) are extracellular.

In terms of assembly, homodimer; further assembles into homooligomer. Interacts with human C1QBP. Interacts (via N-terminus) with protease/methyltransferase p150. Heterodimer with spike glycoprotein E2. As to quaternary structure, heterodimer with spike glycoprotein E1. Structural polyprotein: Specific enzymatic cleavages in vivo yield mature proteins. Two signal peptidase-mediated cleavages within the polyprotein produce the structural proteins capsid, E2, and E1. The E2 signal peptide remains attached to the C-terminus of the capsid protein after cleavage by the signal peptidase. Another signal peptide at E2 C-terminus directs E1 to the ER, with a similar mechanism. Post-translationally, contains three N-linked oligosaccharides. In terms of processing, capsid is phosphorylated on Ser-46 by host. This phosphorylation negatively regulates capsid protein RNA-binding activity. Dephosphorylated by human PP1A.

Its subcellular location is the virion. It localises to the host cytoplasm. It is found in the host mitochondrion. The protein resides in the virion membrane. The protein localises to the host Golgi apparatus membrane. In terms of biological role, capsid protein interacts with genomic RNA and assembles into icosahedric core particles 65-70 nm in diameter. The resulting nucleocapsid eventually associates with the cytoplasmic domain of E2 at the cell membrane, leading to budding and formation of mature virions from host Golgi membranes. Phosphorylation negatively regulates RNA-binding activity, possibly delaying virion assembly during the viral replication phase. Capsid protein dimerizes and becomes disulfide-linked in the virion. Modulates genomic RNA replication. Modulates subgenomic RNA synthesis by interacting with human C1QBP/SF2P32. Induces both perinuclear clustering of mitochondria and the formation of electron-dense intermitochondrial plaques, both hallmarks of rubella virus infected cells. Induces apoptosis when expressed in transfected cells. Responsible for viral attachment to target host cell, by binding to the cell receptor. Its transport to the plasma membrane depends on interaction with E1 protein. The surface glycoproteins display an irregular helical organization and a pseudo-tetrameric inner nucleocapsid arrangement. Functionally, class II viral fusion protein. Fusion activity is inactive as long as E1 is bound to E2 in mature virion. After virus attachment to target cell and clathrin-mediated endocytosis, acidification of the endosome would induce dissociation of E1/E2 heterodimer and concomitant trimerization of the E1 subunits. This E1 homotrimer is fusion active, and promotes release of viral nucleocapsid in cytoplasm after endosome and viral membrane fusion. The cytoplasmic tail of spike glycoprotein E1 modulates virus release. The surface glycoproteins display an irregular helical organization and a pseudo-tetrameric inner nucleocapsid arrangement. In Rubella virus (strain Cendehill) (RUBV), this protein is Structural polyprotein.